A 170-amino-acid chain; its full sequence is UPF0260 protein Rpal_2074 (170 aa).

This sequence belongs to the UPF0260 family.

In Rhodopseudomonas palustris (strain TIE-1), this protein is UPF0260 protein Rpal_2074.